The primary structure comprises 257 residues: Uridylate kinase (257 aa).

8–11 contacts ATP; the sequence is KLSG. The tract at residues 21-26 is involved in allosteric activation by GTP; it reads GSAGFG. A UMP-binding site is contributed by glycine 56. The ATP site is built by glycine 57 and arginine 61. UMP-binding positions include aspartate 75 and 136 to 143; that span reads NGAPFFTT. Residues asparagine 164, tyrosine 170, and aspartate 173 each contribute to the ATP site.

The protein belongs to the UMP kinase family. As to quaternary structure, homohexamer.

The protein resides in the cytoplasm. It catalyses the reaction UMP + ATP = UDP + ADP. It functions in the pathway pyrimidine metabolism; CTP biosynthesis via de novo pathway; UDP from UMP (UMPK route): step 1/1. Allosterically activated by GTP. Inhibited by UTP. Functionally, catalyzes the reversible phosphorylation of UMP to UDP. This Deinococcus geothermalis (strain DSM 11300 / CIP 105573 / AG-3a) protein is Uridylate kinase.